We begin with the raw amino-acid sequence, 249 residues long: Ubiquinone/menaquinone biosynthesis C-methyltransferase UbiE (249 aa).

S-adenosyl-L-methionine-binding positions include threonine 72, aspartate 93, and 121-122 (NA).

It belongs to the class I-like SAM-binding methyltransferase superfamily. MenG/UbiE family.

It catalyses the reaction a 2-demethylmenaquinol + S-adenosyl-L-methionine = a menaquinol + S-adenosyl-L-homocysteine + H(+). The catalysed reaction is a 2-methoxy-6-(all-trans-polyprenyl)benzene-1,4-diol + S-adenosyl-L-methionine = a 5-methoxy-2-methyl-3-(all-trans-polyprenyl)benzene-1,4-diol + S-adenosyl-L-homocysteine + H(+). The protein operates within quinol/quinone metabolism; menaquinone biosynthesis; menaquinol from 1,4-dihydroxy-2-naphthoate: step 2/2. It functions in the pathway cofactor biosynthesis; ubiquinone biosynthesis. Its function is as follows. Methyltransferase required for the conversion of demethylmenaquinol (DMKH2) to menaquinol (MKH2) and the conversion of 2-polyprenyl-6-methoxy-1,4-benzoquinol (DDMQH2) to 2-polyprenyl-3-methyl-6-methoxy-1,4-benzoquinol (DMQH2). This is Ubiquinone/menaquinone biosynthesis C-methyltransferase UbiE from Hahella chejuensis (strain KCTC 2396).